The chain runs to 448 residues: Nucleoprotein (448 aa).

The interval 1-55 (MSFTPGKQSSSRASSGNRSGNGILKWADQSDQSRNVQTRGRRAQPKQTATSQQPS) is disordered. Positions 9 to 22 (SSSRASSGNRSGNG) are enriched in low complexity. Polar residues-rich tracts occupy residues 29–38 (QSDQSRNVQT) and 45–55 (PKQTATSQQPS). The tract at residues 52 to 194 (QQPSGGNVVP…GYYIEGSGRS (143 aa)) is RNA-binding. A CoV N NTD domain is found at 61-190 (PYYSWFSGIT…VLPQGYYIEG (130 aa)). RNA is bound by residues Arg106, Arg122, and Arg164. Disordered regions lie at residues 157 to 231 (TPAD…VTPD), 266 to 297 (ILNK…NFGG), and 385 to 448 (GMMN…TSEI). At Ser167 the chain carries Phosphoserine; by host. At Thr174 the chain carries Phosphothreonine; by host. At Ser191 the chain carries Phosphoserine; by host. Residues 193 to 223 (RSAPNSRSTSRASSRASSAGSRSRANSGNRT) show a composition bias toward low complexity. The CoV N CTD domain maps to 259-384 (AKEIRQKILN…ENLNAYQQQD (126 aa)). Basic residues predominate over residues 266 to 276 (ILNKPRQKRSP). Residues 266 to 384 (ILNKPRQKRS…ENLNAYQQQD (119 aa)) form a dimerization region. Position 390 is a phosphoserine; by host (Ser390). Over residues 399–409 (QKNGQGENDNI) the composition is skewed to polar residues. Over residues 422 to 439 (KSRELTAEDISLLKKMDE) the composition is skewed to basic and acidic residues. Ser423 is subject to Phosphoserine; by host. Residue Thr427 is modified to Phosphothreonine; by host.

Belongs to the betacoronavirus nucleocapsid protein family. As to quaternary structure, homooligomer. Both monomeric and oligomeric forms interact with RNA. Interacts with protein M. Interacts with NSP3; this interaction serves to tether the genome to the newly translated replicase-transcriptase complex at a very early stage of infection. Post-translationally, ADP-ribosylated. The ADP-ribosylation is retained in the virion during infection. In terms of processing, phosphorylated on serine and threonine residues.

The protein localises to the virion. It is found in the host endoplasmic reticulum-Golgi intermediate compartment. The protein resides in the host Golgi apparatus. Its function is as follows. Packages the positive strand viral genome RNA into a helical ribonucleocapsid (RNP) and plays a fundamental role during virion assembly through its interactions with the viral genome and membrane protein M. Plays an important role in enhancing the efficiency of subgenomic viral RNA transcription as well as viral replication. This Bovine coronavirus (strain OK-0514) (BCoV) protein is Nucleoprotein.